A 35-amino-acid chain; its full sequence is Cecropin (35 aa).

I35 bears the Isoleucine amide mark.

The protein belongs to the cecropin family.

It localises to the secreted. Cecropins have lytic and antibacterial activity against several Gram-positive and Gram-negative bacteria. In Bombyx mori (Silk moth), this protein is Cecropin.